Consider the following 203-residue polypeptide: NAD(P)H dehydrogenase (quinone) (203 aa).

One can recognise a Flavodoxin-like domain in the interval 3-194 (VLIVYYSLYG…DAARFQGRHI (192 aa)). Residues 9-14 (SLYGHV) and 82-84 (TRF) contribute to the FMN site. Residue Tyr11 coordinates NAD(+). Substrate is bound at residue Trp102. FMN-binding positions include 117–123 (STATQHG) and His138.

This sequence belongs to the WrbA family. Requires FMN as cofactor.

The enzyme catalyses a quinone + NADH + H(+) = a quinol + NAD(+). It carries out the reaction a quinone + NADPH + H(+) = a quinol + NADP(+). The sequence is that of NAD(P)H dehydrogenase (quinone) from Solidesulfovibrio magneticus (strain ATCC 700980 / DSM 13731 / RS-1) (Desulfovibrio magneticus).